Consider the following 100-residue polypeptide: NAD(P)H-quinone oxidoreductase subunit 4L, chloroplastic (100 aa).

3 helical membrane-spanning segments follow: residues 1-21 (MLEHVLVLSAYLFSVGLYGLI), 31-51 (ICLELIFNAVNINFVTFSDFF), and 60-80 (IFAIFVIAIAAAEAAIGLAIL).

It belongs to the complex I subunit 4L family. As to quaternary structure, NDH is composed of at least 16 different subunits, 5 of which are encoded in the nucleus.

It is found in the plastid. The protein localises to the chloroplast thylakoid membrane. The catalysed reaction is a plastoquinone + NADH + (n+1) H(+)(in) = a plastoquinol + NAD(+) + n H(+)(out). It carries out the reaction a plastoquinone + NADPH + (n+1) H(+)(in) = a plastoquinol + NADP(+) + n H(+)(out). Functionally, NDH shuttles electrons from NAD(P)H:plastoquinone, via FMN and iron-sulfur (Fe-S) centers, to quinones in the photosynthetic chain and possibly in a chloroplast respiratory chain. The immediate electron acceptor for the enzyme in this species is believed to be plastoquinone. Couples the redox reaction to proton translocation, and thus conserves the redox energy in a proton gradient. This is NAD(P)H-quinone oxidoreductase subunit 4L, chloroplastic from Trachelium caeruleum (Blue throatwort).